An 86-amino-acid polypeptide reads, in one-letter code: Small ribosomal subunit protein uS17 (86 aa).

Belongs to the universal ribosomal protein uS17 family. As to quaternary structure, part of the 30S ribosomal subunit.

Its function is as follows. One of the primary rRNA binding proteins, it binds specifically to the 5'-end of 16S ribosomal RNA. This chain is Small ribosomal subunit protein uS17, found in Halalkalibacterium halodurans (strain ATCC BAA-125 / DSM 18197 / FERM 7344 / JCM 9153 / C-125) (Bacillus halodurans).